Here is a 357-residue protein sequence, read N- to C-terminus: Protein pelota homolog (357 aa).

The protein belongs to the eukaryotic release factor 1 family. Pelota subfamily. In terms of assembly, monomer. A divalent metal cation serves as cofactor.

The protein resides in the cytoplasm. May function in recognizing stalled ribosomes, interact with stem-loop structures in stalled mRNA molecules, and effect endonucleolytic cleavage of the mRNA. May play a role in the release non-functional ribosomes and degradation of damaged mRNAs. Has endoribonuclease activity. The protein is Protein pelota homolog of Halobacterium salinarum (strain ATCC 29341 / DSM 671 / R1).